A 78-amino-acid polypeptide reads, in one-letter code: Defensin-like protein 287 (78 aa).

Residues 1–24 form the signal peptide; the sequence is MNNLRVIMSVLLAVLVFTATVSES. 3 cysteine pairs are disulfide-bonded: cysteine 39–cysteine 59, cysteine 45–cysteine 64, and cysteine 51–cysteine 66.

Belongs to the DEFL family.

Its subcellular location is the secreted. This chain is Defensin-like protein 287, found in Arabidopsis thaliana (Mouse-ear cress).